Here is a 543-residue protein sequence, read N- to C-terminus: Neurofilament light polypeptide (543 aa).

The residue at position 2 (S2) is an N-acetylserine. Residues 2–92 (SSFSYEPYYS…LKSIRTQEKA (91 aa)) are head. Residue T21 is glycosylated (O-linked (GlcNAc) threonine). R23 carries the post-translational modification Asymmetric dimethylarginine; alternate. R23 is subject to Omega-N-methylarginine; alternate. An O-linked (GlcNAc) serine glycan is attached at S27. R30 is modified (omega-N-methylarginine). Y43 bears the Phosphotyrosine mark. 3 positions are modified to phosphoserine: S56, S67, and S103. The region spanning 90-400 (EKAQLQDLND…KLLEGEETRL (311 aa)) is the IF rod domain. A coil 1A region spans residues 93-124 (QLQDLNDRFASFIERVHELEQQNKVLEAELLV). The linker 1 stretch occupies residues 125-137 (LRQKHSEPSRFRA). The tract at residues 138–234 (LYEQEIRDLR…KVHEEEIAEL (97 aa)) is coil 1B. Residues 235–252 (QAQIQYAQISVEMDVTKP) are linker 12. A coil 2A region spans residues 253–271 (DLSAALKDIRAQYEKLAAK). Residues 272–280 (NMQNAEEWF) are linker 2. The interval 281 to 396 (KSRFTVLTES…AAYRKLLEGE (116 aa)) is coil 2B. The tract at residues 381–391 (ALDIEIAAYRK) is epitope; recognized by IF-specific monoclonal antibody. The tail, subdomain A stretch occupies residues 397–443 (ETRLSFTSVGSITSGYSQSSQVFGRSAYGGLQTSSYLMSTRSFPSYY). The tail stretch occupies residues 397–543 (ETRLSFTSVG…GEEQAAKKKD (147 aa)). The tract at residues 444 to 543 (TSHVQEEQIE…GEEQAAKKKD (100 aa)) is tail, subdomain B (acidic). Residues 462–543 (KAEEAKDEPP…GEEQAAKKKD (82 aa)) form a disordered region. A compositionally biased stretch (acidic residues) spans 471–525 (PSEGEAEEEEKDKEEAEEEEAAEEEEAAKEESEEAKEEEEGGEGEEGEETKEAEE). Phosphoserine occurs at positions 472 and 502. Residue T520 is modified to Phosphothreonine. A compositionally biased stretch (basic and acidic residues) spans 526–543 (EEKKVEGAGEEQAAKKKD).

Belongs to the intermediate filament family. Forms homodimers (in vitro). Forms heterodimers with NEFH or NEFM; which can further hetero-oligomerize (in vitro). Forms heterodimers with INA (in vitro). Interacts with ARHGEF28. Interacts with TRIM2. Post-translationally, O-glycosylated. Phosphorylated in the head and rod regions by the PKC kinase PKN1, leading to the inhibition of polymerization. In terms of processing, ubiquitinated in the presence of TRIM2 and UBE2D1.

It is found in the cell projection. The protein localises to the axon. It localises to the cytoplasm. The protein resides in the cytoskeleton. Functionally, neurofilaments usually contain three intermediate filament proteins: NEFL, NEFM, and NEFH which are involved in the maintenance of neuronal caliber. May additionally cooperate with the neuronal intermediate filament proteins PRPH and INA to form neuronal filamentous networks. In Homo sapiens (Human), this protein is Neurofilament light polypeptide (NEFL).